The primary structure comprises 423 residues: Site-specific recombinase Flp (423 aa).

Positions 136–422 constitute a Tyr recombinase Flp-type domain; it reads GNSHSKKMLK…DYLSSYINRR (287 aa). Y343 acts as the O-(3'-phospho-DNA)-tyrosine intermediate in catalysis.

It belongs to the 'phage' integrase family. As to quaternary structure, homotetramer.

Its function is as follows. Part of the plasmid amplification system, which corrects any decrease in copy number caused by a rare missegregation event. Catalyzes the recombination between the large inverted repetitions of the 2-micron plasmid during plasmid replication. This recombination event changes the direction of one of the two replication forks in the bidirectionally replicating molecule, effectively resulting in multiple rounds of replication from a single initiation event. Binds specifically to the FLP recognition target (FRT) site where it induces DNA to bend. Three types of bend exist. Type I is approximately 60 degrees and results from 1 FLP molecule binding to 1 symmetry element. Type II is &gt;144 degrees and results from FLP molecules binding to symmetry elements a and b. Type III is approximately 65 degrees and results from FLP molecules binding to symmetry elements b and c. The polypeptide is Site-specific recombinase Flp (FLP1) (Saccharomyces cerevisiae (strain ATCC 204508 / S288c) (Baker's yeast)).